Here is a 368-residue protein sequence, read N- to C-terminus: 1-aminocyclopropane-1-carboxylate oxidase (368 aa).

Positions Pro-177–Pro-307 constitute a Fe2OG dioxygenase domain. The segment at His-191–Thr-226 is disordered. The span at Gln-194–Ser-203 shows a compositional bias: acidic residues. Residues Pro-211–Lys-223 are compositionally biased toward basic and acidic residues. Residues His-229, Asp-231, and His-287 each coordinate Fe cation. Arg-298 is a 2-oxoglutarate binding site.

It belongs to the iron/ascorbate-dependent oxidoreductase family. The cofactor is Fe(2+).

The catalysed reaction is 1-aminocyclopropane-1-carboxylate + L-ascorbate + O2 = ethene + L-dehydroascorbate + hydrogen cyanide + CO2 + 2 H2O. It participates in alkene biosynthesis; ethylene biosynthesis via S-adenosyl-L-methionine; ethylene from S-adenosyl-L-methionine: step 2/2. Its function is as follows. Involved in ethylene biosynthesis. Overexpression induces overproduction of ethylene. The sequence is that of 1-aminocyclopropane-1-carboxylate oxidase (aco) from Dictyostelium discoideum (Social amoeba).